Reading from the N-terminus, the 233-residue chain is 6-carboxyhexanoate--CoA ligase (233 aa).

The protein belongs to the BioW family. Homodimer. The cofactor is Mg(2+).

The enzyme catalyses heptanedioate + ATP + CoA = 6-carboxyhexanoyl-CoA + AMP + diphosphate. The protein operates within metabolic intermediate metabolism; pimeloyl-CoA biosynthesis; pimeloyl-CoA from pimelate: step 1/1. Functionally, catalyzes the transformation of pimelate into pimeloyl-CoA with concomitant hydrolysis of ATP to AMP. The polypeptide is 6-carboxyhexanoate--CoA ligase (Methanocaldococcus sp. (strain FS406-22)).